The sequence spans 506 residues: Protein nucleotidyltransferase YdiU (506 aa).

ATP is bound by residues Gly-95, Gly-97, Arg-98, Lys-118, Asp-130, Gly-131, Arg-181, and Arg-188. The active-site Proton acceptor is Asp-257. Residues Asn-258 and Asp-267 each contribute to the Mg(2+) site. Asp-267 lines the ATP pocket. The segment at 487 to 506 (KHYQDAPTPDQRVKQTFCGT) is disordered.

Belongs to the SELO family. Requires Mg(2+) as cofactor. The cofactor is Mn(2+).

The enzyme catalyses L-seryl-[protein] + ATP = 3-O-(5'-adenylyl)-L-seryl-[protein] + diphosphate. It carries out the reaction L-threonyl-[protein] + ATP = 3-O-(5'-adenylyl)-L-threonyl-[protein] + diphosphate. It catalyses the reaction L-tyrosyl-[protein] + ATP = O-(5'-adenylyl)-L-tyrosyl-[protein] + diphosphate. The catalysed reaction is L-histidyl-[protein] + UTP = N(tele)-(5'-uridylyl)-L-histidyl-[protein] + diphosphate. The enzyme catalyses L-seryl-[protein] + UTP = O-(5'-uridylyl)-L-seryl-[protein] + diphosphate. It carries out the reaction L-tyrosyl-[protein] + UTP = O-(5'-uridylyl)-L-tyrosyl-[protein] + diphosphate. Functionally, nucleotidyltransferase involved in the post-translational modification of proteins. It can catalyze the addition of adenosine monophosphate (AMP) or uridine monophosphate (UMP) to a protein, resulting in modifications known as AMPylation and UMPylation. In Shewanella denitrificans (strain OS217 / ATCC BAA-1090 / DSM 15013), this protein is Protein nucleotidyltransferase YdiU.